The chain runs to 516 residues: D-aminopeptidase (516 aa).

Ser61 (nucleophile) is an active-site residue. Lys64 (proton donor/acceptor) is an active-site residue. Residues 476 to 486 form an important for specificity region; the sequence is RRSMDAPAPGD. Asp480 lines the substrate pocket.

The protein belongs to the peptidase S12 family. Homodimer.

The enzyme catalyses Release of an N-terminal D-amino acid from a peptide, Xaa-|-Yaa-, in which Xaa is preferably D-Ala, D-Ser or D-Thr. D-amino acid amides and methyl esters also are hydrolyzed, as is glycine amide.. Its activity is regulated as follows. Inhibited by beta-lactam compounds such as 6-aminopenicillic acid, 7-aminocephalosporanic acid, benzylpenicillin and ampicillin. Inhibited by p-chloromercuribenzoate. In terms of biological role, hydrolyzes N-terminal residues in D-amino acid-containing peptides. In Cereibacter sphaeroides (strain ATCC 17029 / ATH 2.4.9) (Rhodobacter sphaeroides), this protein is D-aminopeptidase.